We begin with the raw amino-acid sequence, 71 residues long: Probable ribosome maturation protein RlbA (71 aa).

The region spanning 12–69 (ITLGQFLKLADVIQSGGMAKWFLSEHEVLVNDEPDNRRGRKLYVGDVVEIEGFGSFQV) is the S4 RNA-binding domain.

Functionally, may assist in the assembly of the 50S subunit. The polypeptide is Probable ribosome maturation protein RlbA (Bacillus subtilis (strain 168)).